A 216-amino-acid polypeptide reads, in one-letter code: Acyl-homoserine-lactone synthase (216 aa).

This sequence belongs to the autoinducer synthase family.

It catalyses the reaction a fatty acyl-[ACP] + S-adenosyl-L-methionine = an N-acyl-L-homoserine lactone + S-methyl-5'-thioadenosine + holo-[ACP] + H(+). Functionally, required for the synthesis of OHHL (N-(3-oxohexanoyl)-L-homoserine lactone), an autoinducer molecule which binds to CarR and thus acts in the control of the biosynthesis of carbapenem antibiotics. The polypeptide is Acyl-homoserine-lactone synthase (carI) (Pectobacterium carotovorum subsp. carotovorum (Erwinia carotovora subsp. carotovora)).